The primary structure comprises 742 residues: Alcohol dehydrogenase (quinone), dehydrogenase subunit (742 aa).

A signal peptide spans 1–35 (MTRPASAKRRSLLGILAAGTICAAALPYAAVPARA). Glutamate 96 is a pyrroloquinoline quinone binding site. A disulfide bridge connects residues cysteine 142 and cysteine 143. Arginine 148 provides a ligand contact to pyrroloquinoline quinone. Residue glutamate 216 coordinates Ca(2+). Threonine 278 provides a ligand contact to pyrroloquinoline quinone. Residues asparagine 298 and aspartate 343 each coordinate Ca(2+). Aspartate 343 serves as the catalytic Proton acceptor. 2 residues coordinate pyrroloquinoline quinone: lysine 370 and isoleucine 584. The 80-residue stretch at 636-715 (KVVDNGYFQY…AIRQYLIKRA (80 aa)) folds into the Cytochrome c domain. Heme c is bound by residues cysteine 649, cysteine 652, histidine 653, and methionine 692. Residues 722-732 (EVDARKNDKNI) are compositionally biased toward basic and acidic residues. Positions 722–742 (EVDARKNDKNIPENPTLGINP) are disordered.

It belongs to the bacterial PQQ dehydrogenase family. As to quaternary structure, the alcohol dehydrogenase multicomponent enzyme system is composed of a dehydrogenase subunit I (AdhA) and a cytochrome c subunit II (AdhB). Pyrroloquinoline quinone serves as cofactor. Ca(2+) is required as a cofactor. Requires heme c as cofactor.

It localises to the cell membrane. The catalysed reaction is ethanol + a ubiquinone = a ubiquinol + acetaldehyde. In terms of biological role, dehydrogenase component of the alcohol dehydrogenase multicomponent enzyme system which is involved in the production of acetic acid and in the ethanol oxidase respiratory chain. Quinohemoprotein alcohol dehydrogenase (ADH) catalyzes the oxidation of ethanol to acetaldehyde by transferring electrons to the ubiquinone embedded in the membrane phospholipids. The electrons transfer from ethanol to membranous ubiquinone occurs from pyrroloquinoline quinone (PQQ) to one heme c in subunit I (AdhA), and finally to two heme c in subunit II (AdhB). Besides ubiquinone reduction, ADH also has a ubiquinol (QH2) oxidation reaction which mediates electron transfer from ubiquinol to the non-energy generating bypass oxidase system. The electrons transfer occurs from ubiquinol (QH2) to the additional heme c within subunit II (AdhB). This Acetobacter aceti protein is Alcohol dehydrogenase (quinone), dehydrogenase subunit.